The following is a 246-amino-acid chain: Major prion protein (246 aa).

The signal sequence occupies residues 1-15 (MLVLFVATWSDLGLC). Positions 16 to 223 (KKRPKPGGWN…ESQAYYQRGS (208 aa)) are interaction with GRB2, ERI3 and SYN1. Positions 18–102 (RPKPGGWNTG…HKPSKPKTSM (85 aa)) are disordered. 5 repeat units span residues 44–52 (PQGGGGWGQ), 53–60 (PHGGGWGQ), 61–68 (PHGGGWGQ), 69–76 (PHGGGWGQ), and 77–84 (PHGGGWGQ). The 5 X 8 AA tandem repeats of P-H-G-G-G-W-G-Q stretch occupies residues 44 to 84 (PQGGGGWGQPHGGGWGQPHGGGWGQPHGGGWGQPHGGGWGQ). A compositionally biased stretch (gly residues) spans 45-88 (QGGGGWGQPHGGGWGQPHGGGWGQPHGGGWGQPHGGGWGQGGGT). Cu(2+) contacts are provided by H54, G55, G56, H62, G63, G64, H70, G71, G72, H78, G79, and G80. Residues 91–102 (QWHKPSKPKTSM) are compositionally biased toward basic residues. The cysteines at positions 172 and 207 are disulfide-linked. 2 N-linked (GlcNAc...) asparagine glycosylation sites follow: N174 and N190. A lipid anchor (GPI-anchor amidated serine) is attached at S223. Positions 224 to 246 (SMVLFSSPPVILLISFLIFLIVG) are cleaved as a propeptide — removed in mature form.

It belongs to the prion family. Monomer and homodimer. Has a tendency to aggregate into amyloid fibrils containing a cross-beta spine, formed by a steric zipper of superposed beta-strands. Soluble oligomers may represent an intermediate stage on the path to fibril formation. Copper binding may promote oligomerization. Interacts with GRB2, APP, ERI3/PRNPIP and SYN1. Mislocalized cytosolically exposed PrP interacts with MGRN1; this interaction alters MGRN1 subcellular location and causes lysosomal enlargement. Interacts with KIAA1191.

The protein localises to the cell membrane. Its subcellular location is the golgi apparatus. Functionally, its primary physiological function is unclear. Has cytoprotective activity against internal or environmental stresses. May play a role in neuronal development and synaptic plasticity. May be required for neuronal myelin sheath maintenance. May play a role in iron uptake and iron homeostasis. Soluble oligomers are toxic to cultured neuroblastoma cells and induce apoptosis (in vitro). Association with GPC1 (via its heparan sulfate chains) targets PRNP to lipid rafts. Also provides Cu(2+) or Zn(2+) for the ascorbate-mediated GPC1 deaminase degradation of its heparan sulfate side chains. This is Major prion protein (PRNP) from Cercocebus atys (Sooty mangabey).